The following is a 607-amino-acid chain: Glutamine--fructose-6-phosphate aminotransferase [isomerizing] (607 aa).

Cys2 (nucleophile; for GATase activity) is an active-site residue. Residues 2–217 (CGIIGIIGRE…EGDWVVLTRE (216 aa)) enclose the Glutamine amidotransferase type-2 domain. SIS domains follow at residues 283 to 422 (PDFD…VKGQ) and 455 to 597 (VATA…VDQP). Lys602 acts as the For Fru-6P isomerization activity in catalysis.

Homodimer.

It is found in the cytoplasm. It catalyses the reaction D-fructose 6-phosphate + L-glutamine = D-glucosamine 6-phosphate + L-glutamate. Catalyzes the first step in hexosamine metabolism, converting fructose-6P into glucosamine-6P using glutamine as a nitrogen source. The sequence is that of Glutamine--fructose-6-phosphate aminotransferase [isomerizing] from Zymomonas mobilis subsp. mobilis (strain ATCC 31821 / ZM4 / CP4).